Consider the following 80-residue polypeptide: Gamma-conotoxin PnVIIA (80 aa).

The first 19 residues, 1–19 (MEKLTILLLVAAVLMSTQA), serve as a signal peptide directing secretion. The propeptide occupies 20-43 (QNQEQRQQAKINFLSKRKPSAERW). 3 disulfides stabilise this stretch: Cys-47/Cys-61, Cys-54/Cys-65, and Cys-60/Cys-70. The residue at position 59 (Glu-59) is a 4-carboxyglutamate. Position 71 is a 4-carboxyglutamate (Glu-71). A 4-hydroxyproline modification is found at Pro-76. The propeptide occupies 78-80 (FGA).

In terms of tissue distribution, expressed by the venom duct.

The protein localises to the secreted. Gamma-conotoxins may act on voltage-gated non-specific cation pacemaker channels (HCN). Triggers depolarization and firing of action potential bursts in the caudodorsal neurons of lymnaea. This effect is due to activation or enhancement of a slow inward cation current that may underlie endogenous bursting activity of these neurons. This is Gamma-conotoxin PnVIIA from Conus pennaceus (Feathered cone).